Reading from the N-terminus, the 124-residue chain is Small ribosomal subunit protein uS12 (124 aa).

Aspartate 89 is modified (3-methylthioaspartic acid). At lysine 108 the chain carries N6-acetyllysine.

It belongs to the universal ribosomal protein uS12 family. In terms of assembly, part of the 30S ribosomal subunit. Contacts proteins S8 and S17. May interact with IF1 in the 30S initiation complex.

In terms of biological role, with S4 and S5 plays an important role in translational accuracy. Functionally, interacts with and stabilizes bases of the 16S rRNA that are involved in tRNA selection in the A site and with the mRNA backbone. Located at the interface of the 30S and 50S subunits, it traverses the body of the 30S subunit contacting proteins on the other side and probably holding the rRNA structure together. The combined cluster of proteins S8, S12 and S17 appears to hold together the shoulder and platform of the 30S subunit. In Escherichia coli O6:K15:H31 (strain 536 / UPEC), this protein is Small ribosomal subunit protein uS12.